The following is a 316-amino-acid chain: Probable cell division protein WhiA (316 aa).

Residues 275–309 constitute a DNA-binding region (H-T-H motif); that stretch reads TLKELGEMVESGKISKSGINHRLRKLDQIAEQLRN.

This sequence belongs to the WhiA family.

In terms of biological role, involved in cell division and chromosome segregation. This Bacillus pumilus (strain SAFR-032) protein is Probable cell division protein WhiA.